The chain runs to 226 residues: 3-dehydroquinate dehydratase (226 aa).

3-dehydroquinate is bound by residues 30–32 and Arg-62; that span reads EWR. Residue His-118 is the Proton donor/acceptor of the active site. The Schiff-base intermediate with substrate role is filled by Lys-143. Residues Arg-186, Ser-205, and Gln-209 each contribute to the 3-dehydroquinate site.

The protein belongs to the type-I 3-dehydroquinase family. In terms of assembly, homodimer.

The enzyme catalyses 3-dehydroquinate = 3-dehydroshikimate + H2O. It participates in metabolic intermediate biosynthesis; chorismate biosynthesis; chorismate from D-erythrose 4-phosphate and phosphoenolpyruvate: step 3/7. Functionally, involved in the third step of the chorismate pathway, which leads to the biosynthesis of aromatic amino acids. Catalyzes the cis-dehydration of 3-dehydroquinate (DHQ) and introduces the first double bond of the aromatic ring to yield 3-dehydroshikimate. This is 3-dehydroquinate dehydratase from Streptococcus equi subsp. zooepidemicus (strain H70).